The chain runs to 485 residues: Zinc finger protein 165 (485 aa).

Lys23 is covalently cross-linked (Glycyl lysine isopeptide (Lys-Gly) (interchain with G-Cter in SUMO2)). An SCAN box domain is found at 62–127 (GPREALSRLR…EEAVTILEDL (66 aa)). Glycyl lysine isopeptide (Lys-Gly) (interchain with G-Cter in SUMO2) cross-links involve residues Lys162 and Lys195. The C2H2-type 1; degenerate zinc-finger motif lies at 290-314 (KSCKHGTCDQSFKWNSDFINHQIIY). 5 consecutive C2H2-type zinc fingers follow at residues 344–366 (HQCNECGKAFRHSSKLARHQRIH), 372–394 (YECNECGKSFAESSDLTRHRRIH), 400–422 (FGCKECGRAFNLNSHLIRHQRIH), 428–450 (YECSECGKTFRVSSHLIRHFRIH), and 456–478 (YECSECGRAFSQSSNLSQHQRIH).

This sequence belongs to the krueppel C2H2-type zinc-finger protein family. Expressed specifically in testis.

The protein resides in the nucleus. May be involved in transcriptional regulation. The protein is Zinc finger protein 165 (ZNF165) of Homo sapiens (Human).